The chain runs to 67 residues: DNA-directed RNA polymerase subunit omega (67 aa).

The protein belongs to the RNA polymerase subunit omega family. The RNAP catalytic core consists of 2 alpha, 1 beta, 1 beta' and 1 omega subunit. When a sigma factor is associated with the core the holoenzyme is formed, which can initiate transcription.

The catalysed reaction is RNA(n) + a ribonucleoside 5'-triphosphate = RNA(n+1) + diphosphate. Its function is as follows. Promotes RNA polymerase assembly. Latches the N- and C-terminal regions of the beta' subunit thereby facilitating its interaction with the beta and alpha subunits. In Acidovorax ebreus (strain TPSY) (Diaphorobacter sp. (strain TPSY)), this protein is DNA-directed RNA polymerase subunit omega.